A 490-amino-acid polypeptide reads, in one-letter code: 5'-3' exonuclease PLD3 (490 aa).

Topologically, residues Met-1–Trp-38 are cytoplasmic. Residues Val-39–Leu-59 traverse the membrane as a helical; Signal-anchor for type II membrane protein segment. Residues Trp-60–Leu-490 are Lumenal-facing. 2 cysteine pairs are disulfide-bonded: Cys-77/Cys-239 and Cys-81/Cys-237. N-linked (GlcNAc...) asparagine glycosylation is found at Asn-97 and Asn-132. Positions Thr-196 to Ser-223 constitute a PLD phosphodiesterase 1 domain. Catalysis depends on residues His-201, Lys-203, and Asp-208. The Proton donor role is filled by His-201. The phosphate site is built by His-201 and Lys-203. Asn-218 is a binding site for phosphate. Residues Asn-236, Asn-284, and Asn-387 are each glycosylated (N-linked (GlcNAc...) asparagine). Cysteines 366 and 487 form a disulfide. Positions Tyr-411–Tyr-437 constitute a PLD phosphodiesterase 2 domain. His-416 lines the phosphate pocket. His-416 (nucleophile) is an active-site residue. Residue Phe-438 participates in Mg(2+) binding.

Belongs to the phospholipase D family. Homodimer. Interacts with APP. In terms of processing, N-glycosylated. Proteolytically processed to a soluble active form that is stable within endosomes and lysosomes. During transport through the secretory pathway becomes proteolysed by cysteine proteases, thereby releasing a stable soluble lysosomal lumenal polypeptide, whereas the transmembrane-bound fragment is rapidly degraded. Its transport route to lysosomes involves ubiquitination and the ESCRT complex. Post-translationally, ubiquitinated at N-terminus. Ubiquitination mediates sorting into lysosomes. Widely expressed. In the brain, high levels of expression are detected in the frontal, temporal and occipital cortices and hippocampus. Expressed at low level in corpus callosum. Expressed in plasmacytoid dendritic cells and monocytes (at protein level).

The protein localises to the endoplasmic reticulum membrane. It is found in the lysosome lumen. It localises to the early endosome membrane. The protein resides in the late endosome membrane. Its subcellular location is the golgi apparatus membrane. The protein localises to the endosome membrane. The enzyme catalyses Exonucleolytic cleavage in the 5'- to 3'-direction to yield nucleoside 3'-phosphates.. It catalyses the reaction a 5'-end 5'-dephospho-ribonucleotidyl-ribonucleotide-RNA + H2O = a ribonucleoside 3'-phosphate + a 5'-end dephospho-ribonucleoside-RNA + H(+). The catalysed reaction is a ribonucleoside 3'-phosphate-2'-3'-cyclophospho-GMP + H2O = a ribonucleoside 3'-phosphate + 2',3'-cyclophospho-GMP + H(+). It carries out the reaction a 5'-end 5'-dephospho-2'-deoxyribonucleotidyl-2'-deoxyribonucleotide in single-stranded DNA + H2O = a 5'-end dephospho-2'-deoxyribonucleoside in single-stranded DNA + a 2'-deoxyribonucleoside 3'-phosphate + H(+). The enzyme catalyses a 5'-end 5'-phospho-2'-deoxyribonucleotide in single-stranded DNA + H2O = a 5'-end 5'-dephospho-2'-deoxyribonucleotide in single-stranded DNA + phosphate. It catalyses the reaction a 3-lyso-sn-glycero-1-phospho-(3'-acyl-1'-sn-glycerol) + a 1-acyl-sn-glycerol = a 3-acyl-sn-glycero-1-phospho-(3'-acyl-1'-sn-glycerol) + glycerol. The catalysed reaction is 3-lyso-sn-glycero-1-phospho-(3'-(9Z-octadecenoyl)-1'-sn-glycerol) + 1-(9Z-octadecenoyl)-sn-glycerol = 3-(9Z-octadecenoyl)-sn-glycero-1-phospho-(3'-(9Z-octadecenoyl)-1'-sn-glycerol) + glycerol. The exonuclease activity toward ssDNA substrate is Ca(2+) and Mg(2+)-independent, but it is inhibited by Fe(2+), Cu(2+) and to a lesser extent Zn(2+) ions. In terms of biological role, 5'-&gt;3' exonuclease that hydrolyzes the phosphodiester bond of single-stranded DNA (ssDNA) and RNA molecules to form nucleoside 3'-monophosphates and 5'-end 5'-hydroxy deoxyribonucleotide/ribonucleotide fragments. Partially redundant with PLD4, can cleave all four nucleotides displaying higher efficiency for ssDNA and RNA fragments initiated with uridine and guanosine residues and lower efficiency for cytidine-initiated substrates. As a result, it does not always degrade polynucleotides to the single nucleotide level, it can stall at specific sites sparing certain fragments from exonucleolytic degradation. Processes self and pathogenic ssDNA and RNA molecules that reach the endolysosomal compartment via phagocytosis or autophagy and may serve as 'danger' signals for recognition by innate immune receptors such as toll-like receptors (TLRs). Degrades mitochondrial CpG-rich ssDNA fragments to prevent TLR9 activation and autoinflammatory response, but it can cleave viral RNA to generate ligands for TLR7 activation and initiate antiviral immune responses. In plasmacytoid dendritic cells, it cooperates with endonuclease RNASET2 to release 2',3'-cyclic guanosine monophosphate (2',3'-cGMP), a potent stimulatory ligand for TLR7. Produces 2',3'-cGMPs and cytidine-rich RNA fragments that occupy TLR7 ligand-binding pockets and trigger a signaling-competent state. Can exert polynucleotide phosphatase activity toward 5'-phosphorylated ssDNA substrates although at a slow rate. Transphosphatidylase that catalyzes the exchange with R to S stereo-inversion of the glycerol moiety between (S,R)-lysophosphatidylglycerol (LPG) and monoacylglycerol (MAG) substrates to yield (S,S)-bis(monoacylglycero)phosphate (BMP). Can synthesize a variety of (S,S)-BMPs representing the main phospholipid constituent of lysosomal intralumenal vesicle (ILV) membranes that bind acid hydrolases for lipid degradation. Regulates the homeostasis and interorganellar communication of the endolysosomal system with an overall impact on cellular removal of dysfunctional organelles via autophagy as well as proper protein and lipid turnover. May play a role in myotube formation in response to ER stress. The sequence is that of 5'-3' exonuclease PLD3 from Homo sapiens (Human).